The sequence spans 233 residues: MLIPIPALNDNYIWVYKRENLSVIVIDIPEIAALSQFIQAQNLVIGALLITHNHRDHIGALAEFKQFYPHVHIYGPAECADQGVTQVIDAGRLIIDEYHIDVLPTGGHTAQHLSFLVDGHLFCGDTLFSAGCGRVFTGDYSQMFTSLQLLKSLPDETIVCPAHEYTLGNLAFALTTGKNKSAVQKQLEKVKKLRAENNPSLPTTLALEKQINPFLQVEGLEEFIELRKAKDMF.

The Zn(2+) site is built by His52, His54, Asp56, His57, His108, Asp125, and His163.

Belongs to the metallo-beta-lactamase superfamily. Glyoxalase II family. In terms of assembly, monomer. Requires Zn(2+) as cofactor.

The enzyme catalyses an S-(2-hydroxyacyl)glutathione + H2O = a 2-hydroxy carboxylate + glutathione + H(+). It participates in secondary metabolite metabolism; methylglyoxal degradation; (R)-lactate from methylglyoxal: step 2/2. Thiolesterase that catalyzes the hydrolysis of S-D-lactoyl-glutathione to form glutathione and D-lactic acid. The protein is Hydroxyacylglutathione hydrolase of Histophilus somni (strain 2336) (Haemophilus somnus).